The sequence spans 234 residues: Protein SSP120 (234 aa).

A signal peptide spans 1-22 (MRFLRGFVFSLAFTLYKVTATA). EF-hand domains lie at 52-87 (LKDY…NREE) and 108-143 (MAKR…GNKF). At Thr-212 the chain carries Phosphothreonine.

This chain is Protein SSP120 (SSP120), found in Saccharomyces cerevisiae (strain ATCC 204508 / S288c) (Baker's yeast).